Here is a 98-residue protein sequence, read N- to C-terminus: DNA-binding protein Fis (98 aa).

Residues Q74–K93 constitute a DNA-binding region (H-T-H motif).

This sequence belongs to the transcriptional regulatory Fis family. As to quaternary structure, homodimer.

In terms of biological role, activates ribosomal RNA transcription. Plays a direct role in upstream activation of rRNA promoters. This chain is DNA-binding protein Fis, found in Sodalis glossinidius (strain morsitans).